The primary structure comprises 347 residues: Chaperone protein DnaJ 1 (347 aa).

The 71-residue stretch at 5–75 (DPHSLLGLSP…PAAAPHDAQA (71 aa)) folds into the J domain. Residues 68 to 77 (AAPHDAQAAD) show a composition bias toward low complexity. Residues 68-91 (AAPHDAQAADARPEPPPEAPPRGA) are disordered. The CR-type zinc finger occupies 107–181 (GGEKAFTIAD…CHGSGQARAA (75 aa)). Cys-120, Cys-123, Cys-137, Cys-140, Cys-155, Cys-158, Cys-169, and Cys-172 together coordinate Zn(2+). CXXCXGXG motif repeat units follow at residues 120–127 (CGACGGSG), 137–144 (CATCHGSG), 155–162 (CADCAGRG), and 169–176 (CGACHGSG).

The protein belongs to the DnaJ family. As to quaternary structure, homodimer. Zn(2+) serves as cofactor.

Its subcellular location is the cytoplasm. In terms of biological role, participates actively in the response to hyperosmotic and heat shock by preventing the aggregation of stress-denatured proteins and by disaggregating proteins, also in an autonomous, DnaK-independent fashion. Unfolded proteins bind initially to DnaJ; upon interaction with the DnaJ-bound protein, DnaK hydrolyzes its bound ATP, resulting in the formation of a stable complex. GrpE releases ADP from DnaK; ATP binding to DnaK triggers the release of the substrate protein, thus completing the reaction cycle. Several rounds of ATP-dependent interactions between DnaJ, DnaK and GrpE are required for fully efficient folding. Also involved, together with DnaK and GrpE, in the DNA replication of plasmids through activation of initiation proteins. The chain is Chaperone protein DnaJ 1 from Aromatoleum aromaticum (strain DSM 19018 / LMG 30748 / EbN1) (Azoarcus sp. (strain EbN1)).